A 68-amino-acid polypeptide reads, in one-letter code: Cytochrome c3 (68 aa).

Positions 17, 20, 26, 29, 30, 45, 49, 52, 53, 62, 65, and 66 each coordinate heme.

Binds 3 heme groups per subunit.

In terms of biological role, participates in sulfate respiration coupled with phosphorylation by transferring electrons from the enzyme dehydrogenase to ferredoxin. The protein is Cytochrome c3 (cyd) of Desulfuromonas acetoxidans (Chloropseudomonas ethylica).